The chain runs to 104 residues: Protein KleF (104 aa).

This chain is Protein KleF (kleF), found in Escherichia coli.